We begin with the raw amino-acid sequence, 272 residues long: Dermonecrotic toxin SpeSicTox-betaIB2b (272 aa).

H5 is an active-site residue. Mg(2+) is bound by residues E25 and D27. Residue H41 is the Nucleophile of the active site. 2 disulfide bridges follow: C45–C51 and C47–C191. D85 lines the Mg(2+) pocket.

Belongs to the arthropod phospholipase D family. Class II subfamily. The cofactor is Mg(2+). In terms of tissue distribution, expressed by the venom gland.

Its subcellular location is the secreted. The catalysed reaction is an N-(acyl)-sphingosylphosphocholine = an N-(acyl)-sphingosyl-1,3-cyclic phosphate + choline. It catalyses the reaction an N-(acyl)-sphingosylphosphoethanolamine = an N-(acyl)-sphingosyl-1,3-cyclic phosphate + ethanolamine. It carries out the reaction a 1-acyl-sn-glycero-3-phosphocholine = a 1-acyl-sn-glycero-2,3-cyclic phosphate + choline. The enzyme catalyses a 1-acyl-sn-glycero-3-phosphoethanolamine = a 1-acyl-sn-glycero-2,3-cyclic phosphate + ethanolamine. Its function is as follows. Dermonecrotic toxins cleave the phosphodiester linkage between the phosphate and headgroup of certain phospholipids (sphingolipid and lysolipid substrates), forming an alcohol (often choline) and a cyclic phosphate. This toxin acts on sphingomyelin (SM). It may also act on ceramide phosphoethanolamine (CPE), lysophosphatidylcholine (LPC) and lysophosphatidylethanolamine (LPE), but not on lysophosphatidylserine (LPS), and lysophosphatidylglycerol (LPG). It acts by transphosphatidylation, releasing exclusively cyclic phosphate products as second products. Induces dermonecrosis, hemolysis, increased vascular permeability, edema, inflammatory response, and platelet aggregation. The sequence is that of Dermonecrotic toxin SpeSicTox-betaIB2b from Sicarius peruensis (Six-eyed sand spider).